Here is a 37-residue protein sequence, read N- to C-terminus: Photosystem II reaction center protein T (37 aa).

Residues Ala-3–Phe-23 traverse the membrane as a helical segment.

The protein belongs to the PsbT family. PSII is composed of 1 copy each of membrane proteins PsbA, PsbB, PsbC, PsbD, PsbE, PsbF, PsbH, PsbI, PsbJ, PsbK, PsbL, PsbM, PsbT, PsbY, PsbZ, Psb30/Ycf12, at least 3 peripheral proteins of the oxygen-evolving complex and a large number of cofactors. It forms dimeric complexes.

The protein localises to the plastid. It localises to the chloroplast thylakoid membrane. Functionally, found at the monomer-monomer interface of the photosystem II (PS II) dimer, plays a role in assembly and dimerization of PSII. PSII is a light-driven water plastoquinone oxidoreductase, using light energy to abstract electrons from H(2)O, generating a proton gradient subsequently used for ATP formation. In Ephedra sinica (Chinese ephedra), this protein is Photosystem II reaction center protein T.